Reading from the N-terminus, the 35-residue chain is Potassium channel toxin alpha-KTx 6.15 (35 aa).

4 disulfides stabilise this stretch: cysteine 3/cysteine 24, cysteine 9/cysteine 29, cysteine 13/cysteine 31, and cysteine 19/cysteine 34.

Belongs to the short scorpion toxin superfamily. Potassium channel inhibitor family. Alpha-KTx 06 subfamily. Expressed by the venom gland.

The protein localises to the secreted. Blocks voltage-gated potassium channels rKv1.1/KCNA1 (IC(50)=13 nM), rKv1.2/KCNA2 (IC(50)=16 nM) and rKv1.3/KCNA3 (IC(50)=2 nM). This Hemiscorpius lepturus (Scorpion) protein is Potassium channel toxin alpha-KTx 6.15.